The following is a 71-amino-acid chain: Small ribosomal subunit protein bS21 (71 aa).

A disordered region spans residues 39-71 (EKPTTVRKRAKAAAQKRHAKKLARENARRVRLY). Residues 43-59 (TVRKRAKAAAQKRHAKK) are compositionally biased toward basic residues. The span at 60–71 (LARENARRVRLY) shows a compositional bias: basic and acidic residues.

This sequence belongs to the bacterial ribosomal protein bS21 family.

This Vibrio atlanticus (strain LGP32) (Vibrio splendidus (strain Mel32)) protein is Small ribosomal subunit protein bS21.